The chain runs to 397 residues: S-adenosylmethionine synthase (397 aa).

His-15 is a binding site for ATP. Asp-17 is a Mg(2+) binding site. Glu-43 serves as a coordination point for K(+). L-methionine is bound by residues Glu-56 and Gln-99. The flexible loop stretch occupies residues 99-109 (QSPDIAQGVTA). ATP-binding positions include 173–175 (DGK), 242–243 (KF), Asp-251, 257–258 (RK), Ala-274, and Lys-278. L-methionine is bound at residue Asp-251. Lys-282 is a binding site for L-methionine.

This sequence belongs to the AdoMet synthase family. Homotetramer; dimer of dimers. Mg(2+) is required as a cofactor. It depends on K(+) as a cofactor.

The protein localises to the cytoplasm. The catalysed reaction is L-methionine + ATP + H2O = S-adenosyl-L-methionine + phosphate + diphosphate. It functions in the pathway amino-acid biosynthesis; S-adenosyl-L-methionine biosynthesis; S-adenosyl-L-methionine from L-methionine: step 1/1. Functionally, catalyzes the formation of S-adenosylmethionine (AdoMet) from methionine and ATP. The overall synthetic reaction is composed of two sequential steps, AdoMet formation and the subsequent tripolyphosphate hydrolysis which occurs prior to release of AdoMet from the enzyme. In Cutibacterium acnes (strain DSM 16379 / KPA171202) (Propionibacterium acnes), this protein is S-adenosylmethionine synthase.